Here is a 397-residue protein sequence, read N- to C-terminus: ATP-dependent RNA helicase eIF4A (397 aa).

The short motif at 23–51 is the Q motif element; that stretch reads YKFDDLNLKPNIVRGIFGYGYETPSAIQQ. The region spanning 54–224 is the Helicase ATP-binding domain; the sequence is ILPITEGRDV…TKFMNNPVRI (171 aa). 67-74 provides a ligand contact to ATP; it reads AQSGTGKT. The short motif at 172–175 is the DEAD box element; the sequence is DEAD. Residues 235–396 enclose the Helicase C-terminal domain; the sequence is GIKQFYINVE…EMPADIGALF (162 aa).

It belongs to the DEAD box helicase family. eIF4A subfamily. As to quaternary structure, component of the eIF4F complex, which composition varies with external and internal environmental conditions. It is composed of at least eIF4A, eIF4E and eIF4G.

It localises to the cytoplasm. The catalysed reaction is ATP + H2O = ADP + phosphate + H(+). Its function is as follows. ATP-dependent RNA helicase which is a subunit of the eIF4F complex involved in cap recognition and is required for mRNA binding to ribosome. In the current model of translation initiation, eIF4A unwinds RNA secondary structures in the 5'-UTR of mRNAs which is necessary to allow efficient binding of the small ribosomal subunit, and subsequent scanning for the initiator codon. This Candida albicans (strain SC5314 / ATCC MYA-2876) (Yeast) protein is ATP-dependent RNA helicase eIF4A (TIF1).